Reading from the N-terminus, the 175-residue chain is Homeobox expressed in ES cells 1 (175 aa).

The interval 1–44 is disordered; the sequence is MSPNLQEGARLVEGKPSSTSFSIESILGLDQKKDDAPSMKPHRP. The segment at residues 108-167 is a DNA-binding region (homeobox); that stretch reads GRRPRTAFTQNQVEVLENVFRVNCYPGIDIREDLARKLNLEEDRIQIWFQNRRAKLKRSH.

It belongs to the ANF homeobox family. Interacts with TLE1.

The protein resides in the nucleus. Its function is as follows. Required for the normal development of the forebrain, eyes and other anterior structures such as the olfactory placodes and pituitary gland. Possible transcriptional repressor. Binds to the palindromic PIII sequence, 5'-AGCTTGAGTCTAATTGAATTAACTGTAC-3'. The polypeptide is Homeobox expressed in ES cells 1 (HESX1) (Oryctolagus cuniculus (Rabbit)).